A 436-amino-acid chain; its full sequence is Enolase (436 aa).

Gln167 contributes to the (2R)-2-phosphoglycerate binding site. The Proton donor role is filled by Glu209. Mg(2+) contacts are provided by Asp246, Glu291, and Asp318. Residues Lys343, Arg372, Ser373, and Lys394 each contribute to the (2R)-2-phosphoglycerate site. The Proton acceptor role is filled by Lys343.

The protein belongs to the enolase family. Component of the RNA degradosome, a multiprotein complex involved in RNA processing and mRNA degradation. It depends on Mg(2+) as a cofactor.

The protein resides in the cytoplasm. It localises to the secreted. It is found in the cell surface. It carries out the reaction (2R)-2-phosphoglycerate = phosphoenolpyruvate + H2O. Its pathway is carbohydrate degradation; glycolysis; pyruvate from D-glyceraldehyde 3-phosphate: step 4/5. Catalyzes the reversible conversion of 2-phosphoglycerate (2-PG) into phosphoenolpyruvate (PEP). It is essential for the degradation of carbohydrates via glycolysis. The protein is Enolase of Haemophilus influenzae (strain PittGG).